The chain runs to 453 residues: 13-hydroxylupanine O-tigloyltransferase (453 aa).

Catalysis depends on proton acceptor residues H166 and D385.

This sequence belongs to the plant acyltransferase family. In terms of assembly, monomer. As to expression, expressed in roots and hypocotyls. Detected in seeds, leaves and cotyledons, but not in young developing leaves.

It carries out the reaction 13-hydroxylupanine + (2E)-2-methylbut-2-enoyl-CoA = 13-(2-methylcrotonoyloxy)lupanine + CoA. With respect to regulation, inhibited by N-ethylmaleimide, p-chloromercuribenzoic acid and diethylpyrocarbonate (DEPC). Functionally, acyl-CoA-dependent acyltransferase involved in the synthesis of lupanine alkaloids. Can use both (-)-13alpha-hydroxymultiflorine and (+)-13alpha-hydroxylupanine as substrates. Lower activity with (-)-3beta, 13alpha-dihydroxylupanine, but no activity with (+)-epilupinine and (-)-lupinine as substrates. Tigloyl-CoA, benzoyl-CoA and, more slowly, acetyl-CoA, propionyl-CoA and 2-butenoyl-CoA can act as acyl donors. This is 13-hydroxylupanine O-tigloyltransferase (HMT/HLT) from Lupinus albus (White lupine).